The following is a 368-amino-acid chain: tRNA-specific 2-thiouridylase MnmA (368 aa).

ATP contacts are provided by residues 11–18 (GMSGGVDS) and Met-37. Residues 97 to 99 (NPD) are interaction with target base in tRNA. Cys-102 acts as the Nucleophile in catalysis. Cys-102 and Cys-199 are oxidised to a cystine. Gly-127 contacts ATP. Residues 149–151 (KDQ) form an interaction with tRNA region. The active-site Cysteine persulfide intermediate is the Cys-199. The segment at 311 to 312 (RY) is interaction with tRNA.

It belongs to the MnmA/TRMU family. As to quaternary structure, interacts with TusE.

Its subcellular location is the cytoplasm. The enzyme catalyses S-sulfanyl-L-cysteinyl-[protein] + uridine(34) in tRNA + AH2 + ATP = 2-thiouridine(34) in tRNA + L-cysteinyl-[protein] + A + AMP + diphosphate + H(+). Functionally, catalyzes the 2-thiolation of uridine at the wobble position (U34) of tRNA(Lys), tRNA(Glu) and tRNA(Gln), leading to the formation of s(2)U34, the first step of tRNA-mnm(5)s(2)U34 synthesis. Sulfur is provided by IscS, via a sulfur-relay system. Binds ATP and its substrate tRNAs. This Salmonella choleraesuis (strain SC-B67) protein is tRNA-specific 2-thiouridylase MnmA.